Here is a 273-residue protein sequence, read N- to C-terminus: 2-dehydro-3-deoxyphosphooctonate aldolase (273 aa).

This sequence belongs to the KdsA family.

The protein resides in the cytoplasm. The enzyme catalyses D-arabinose 5-phosphate + phosphoenolpyruvate + H2O = 3-deoxy-alpha-D-manno-2-octulosonate-8-phosphate + phosphate. It participates in carbohydrate biosynthesis; 3-deoxy-D-manno-octulosonate biosynthesis; 3-deoxy-D-manno-octulosonate from D-ribulose 5-phosphate: step 2/3. The protein operates within bacterial outer membrane biogenesis; lipopolysaccharide biosynthesis. This chain is 2-dehydro-3-deoxyphosphooctonate aldolase, found in Geobacter sp. (strain M21).